The sequence spans 419 residues: GTPase Obg (419 aa).

The 158-residue stretch at 1–158 folds into the Obg domain; sequence MIFIDTAEII…RRLRLELKLV (158 aa). The 170-residue stretch at 159-328 folds into the OBG-type G domain; it reads AHVGLVGLPN…LVDVLFELIS (170 aa). Residues 165–172, 190–194, 211–214, 281–284, and 309–311 each bind GTP; these read GLPNAGKS, FTTRS, DVPG, NKID, and SAA. Mg(2+)-binding residues include serine 172 and threonine 192. In terms of domain architecture, OCT spans 344 to 419; sequence ELPPLPEDFS…VIHDKAFEIL (76 aa).

It belongs to the TRAFAC class OBG-HflX-like GTPase superfamily. OBG GTPase family. In terms of assembly, monomer. Requires Mg(2+) as cofactor.

It is found in the cytoplasm. An essential GTPase which binds GTP, GDP and possibly (p)ppGpp with moderate affinity, with high nucleotide exchange rates and a fairly low GTP hydrolysis rate. Plays a role in control of the cell cycle, stress response, ribosome biogenesis and in those bacteria that undergo differentiation, in morphogenesis control. The chain is GTPase Obg from Coprothermobacter proteolyticus (strain ATCC 35245 / DSM 5265 / OCM 4 / BT).